A 282-amino-acid polypeptide reads, in one-letter code: S-formylglutathione hydrolase (282 aa).

Residue alanine 2 is modified to N-acetylalanine. The residue at position 4 (lysine 4) is an N6-succinyllysine. Serine 149 (charge relay system) is an active-site residue. Lysine 200 is subject to N6-acetyllysine. Catalysis depends on charge relay system residues aspartate 226 and histidine 260.

This sequence belongs to the esterase D family. In terms of assembly, homodimer.

It is found in the cytoplasm. Its subcellular location is the cytoplasmic vesicle. The catalysed reaction is S-formylglutathione + H2O = formate + glutathione + H(+). In terms of biological role, serine hydrolase involved in the detoxification of formaldehyde. This is S-formylglutathione hydrolase (Esd) from Mus musculus (Mouse).